The primary structure comprises 652 residues: Ubiquitin-like modifier-activating enzyme ATG7 (652 aa).

The GXGXXG motif signature appears at 335–340 (GAGTLG). The Glycyl thioester intermediate role is filled by cysteine 519.

This sequence belongs to the ATG7 family. As to quaternary structure, homodimer.

The protein resides in the cytoplasm. Its subcellular location is the preautophagosomal structure. E1-like activating enzyme involved in the 2 ubiquitin-like systems required for cytoplasm to vacuole transport (Cvt) and autophagy. Activates ATG12 for its conjugation with ATG5 and ATG8 for its conjugation with phosphatidylethanolamine. Both systems are needed for the ATG8 association to Cvt vesicles and autophagosomes membranes. Autophagy is essential for maintenance of amino acid levels and protein synthesis under nitrogen starvation. Required for selective autophagic degradation of the nucleus (nucleophagy) as well as for mitophagy which contributes to regulate mitochondrial quantity and quality by eliminating the mitochondria to a basal level to fulfill cellular energy requirements and preventing excess ROS production. Plays a role in the regulation of filamentous growth and chronological longevity. In Debaryomyces hansenii (strain ATCC 36239 / CBS 767 / BCRC 21394 / JCM 1990 / NBRC 0083 / IGC 2968) (Yeast), this protein is Ubiquitin-like modifier-activating enzyme ATG7 (ATG7).